The sequence spans 267 residues: Farnesyl diphosphate phosphatase YisP (267 aa).

It belongs to the phytoene/squalene synthase family. Monomer.

The enzyme catalyses (2E,6E)-farnesyl diphosphate + H2O = (2E,6E)-farnesol + diphosphate. Diphosphate release from FPP is inhibited by zaragozic acid. Its function is as follows. A farnesyl diphosphate (FPP) phosphatase. Involved in biofilm formation, its disruption blocks biofilm synthesis which is restored by exogenous farnesol. Releases diphosphate from FPP, was initally suggested to be a squalene synthase. Diphosphate release is higher from FPP than geranyl pyrophosphate (GPP) or geranylgeranyl pyrophosphate (GGPP). Biofilm synthesis is partially restored by exogenous squalene, beta-carotene or retinol. Required for integrity of cell membrane lipid rafts. Involved in spatial organization of membranes, required for the flotillin-like proteins FloT and FloA to function correctly. The sequence is that of Farnesyl diphosphate phosphatase YisP (yisP) from Bacillus subtilis (strain 168).